The chain runs to 415 residues: D-galactonate dehydratase family member RspA (415 aa).

Asn48 and His133 together coordinate substrate. The Proton donor/acceptor role is filled by Tyr170. Asp223 is a Mg(2+) binding site. His225 functions as the Proton donor/acceptor in the catalytic mechanism. Residues Glu249, Asp250, and Glu275 each contribute to the Mg(2+) site. Glu275, Arg296, His325, Asp329, and Glu352 together coordinate substrate.

This sequence belongs to the mandelate racemase/muconate lactonizing enzyme family. GalD subfamily. Requires Mg(2+) as cofactor.

The enzyme catalyses D-mannonate = 2-dehydro-3-deoxy-D-gluconate + H2O. Its function is as follows. Has low D-mannonate dehydratase activity (in vitro), suggesting that this is not a physiological substrate and that it has no significant role in D-mannonate degradation in vivo. Has no detectable activity with a panel of 70 other acid sugars (in vitro). This Escherichia coli O6:H1 (strain CFT073 / ATCC 700928 / UPEC) protein is D-galactonate dehydratase family member RspA (rspA).